Here is a 360-residue protein sequence, read N- to C-terminus: Peptide chain release factor 1 (360 aa).

The residue at position 235 (Gln-235) is an N5-methylglutamine. The span at 283–293 shows a compositional bias: basic and acidic residues; sequence EREAQAKEASA. The disordered stretch occupies residues 283–305; it reads EREAQAKEASARKSLIGSGDRSD.

The protein belongs to the prokaryotic/mitochondrial release factor family. Post-translationally, methylated by PrmC. Methylation increases the termination efficiency of RF1.

The protein resides in the cytoplasm. Its function is as follows. Peptide chain release factor 1 directs the termination of translation in response to the peptide chain termination codons UAG and UAA. The polypeptide is Peptide chain release factor 1 (Ralstonia pickettii (strain 12J)).